The sequence spans 393 residues: NADH-quinone oxidoreductase subunit D (393 aa).

It belongs to the complex I 49 kDa subunit family. As to quaternary structure, NDH-1 is composed of 14 different subunits. Subunits NuoB, C, D, E, F, and G constitute the peripheral sector of the complex.

It is found in the cell inner membrane. The catalysed reaction is a quinone + NADH + 5 H(+)(in) = a quinol + NAD(+) + 4 H(+)(out). Its function is as follows. NDH-1 shuttles electrons from NADH, via FMN and iron-sulfur (Fe-S) centers, to quinones in the respiratory chain. The immediate electron acceptor for the enzyme in this species is believed to be ubiquinone. Couples the redox reaction to proton translocation (for every two electrons transferred, four hydrogen ions are translocated across the cytoplasmic membrane), and thus conserves the redox energy in a proton gradient. This is NADH-quinone oxidoreductase subunit D from Ehrlichia ruminantium (strain Welgevonden).